The primary structure comprises 455 residues: MSNDKAATSTNFNLTPNRERIFQELSELISHYSPHSMPEHADTHEEAAKWVTAKLEELGLDVTRHPTVDDADTIIGVKEPVGDAPTILLYSHYDVVPAQNPAVWTNDPLELDERDGRWYGRGAADCKGNVIMHLEALRMVQENGGTDLGLKVVMEGSEELGGEDGLGKLIDANPELFTADVIFIGDGGNVAVGIPTLTTHLRGGAQLRFKVDTLEGPVHSGGWGGAAPDAAHALIRIIDSFFDEHGRTTIEGVDTTAKWEGDPYDRETFRKDARVLDGVQLLGTVDDEPADMVWARPAITVIGFTSVPVEDATNIVNPTAEAQFNLRVPAPQSAAEVAKKVEEQIRARAPWGAKVEVSITGVNEPFSTDPNGPAVQHFGKCLQDAYGAEHLTVVGTGGSIPLTVTLQKHFPDAEFALYGVADPAANIHGVDESVDPTEIEHVAIAEAEFLLTYGK.

Position 92 (H92) interacts with Zn(2+). D94 is an active-site residue. Position 125 (D125) interacts with Zn(2+). Residue E158 is the Proton acceptor of the active site. E159, E163, and H428 together coordinate Zn(2+).

The protein belongs to the peptidase M20F family. It depends on Zn(2+) as a cofactor.

The enzyme catalyses an S-substituted L-cysteinylglycine + H2O = an S-substituted L-cysteine + glycine. It carries out the reaction S-(1-hydroxy-3-methylhexan-3-yl)-L-cysteinylglycine + H2O = S-(1-hydroxy-3-methylhexan-3-yl)-L-cysteine + glycine. It catalyses the reaction S-benzyl-L-cysteinylglycine + H2O = S-benzyl-L-cysteine + glycine. Its function is as follows. Metallopeptidase that hydrolyzes the Cys-Gly bond of Cys-Gly-S-conjugates. Involved in the formation of the human body odorant 3-methyl-3-sulfanylhexan-1-ol (3M3SH) from odorless axilla secretions. Catalyzes the hydrolysis of the Cys-Gly bond of the Cys-Gly-S-conjugate of 3M3SH, a key precursor secreted by apocrine glands in human axilla skin. The Cys-S-conjugate obtained is then cleaved by the Cys-S-conjugate beta-lyase MetC, which finally releases 3M3SH. The polypeptide is Cysteinylglycine-S-conjugate dipeptidase (Corynebacterium striatum).